The following is a 98-amino-acid chain: Large ribosomal subunit protein uL23 (98 aa).

Belongs to the universal ribosomal protein uL23 family. Part of the 50S ribosomal subunit. Contacts protein L29, and trigger factor when it is bound to the ribosome.

Functionally, one of the early assembly proteins it binds 23S rRNA. One of the proteins that surrounds the polypeptide exit tunnel on the outside of the ribosome. Forms the main docking site for trigger factor binding to the ribosome. This is Large ribosomal subunit protein uL23 from Alcanivorax borkumensis (strain ATCC 700651 / DSM 11573 / NCIMB 13689 / SK2).